A 346-amino-acid chain; its full sequence is Methylthioribose-1-phosphate isomerase (346 aa).

Substrate-binding positions include 48-50, arginine 91, and glutamine 196; that span reads RGA. Residue aspartate 237 is the Proton donor of the active site. 247-248 contributes to the substrate binding site; that stretch reads NK.

It belongs to the eIF-2B alpha/beta/delta subunits family. MtnA subfamily.

It catalyses the reaction 5-(methylsulfanyl)-alpha-D-ribose 1-phosphate = 5-(methylsulfanyl)-D-ribulose 1-phosphate. The protein operates within amino-acid biosynthesis; L-methionine biosynthesis via salvage pathway; L-methionine from S-methyl-5-thio-alpha-D-ribose 1-phosphate: step 1/6. Its function is as follows. Catalyzes the interconversion of methylthioribose-1-phosphate (MTR-1-P) into methylthioribulose-1-phosphate (MTRu-1-P). The polypeptide is Methylthioribose-1-phosphate isomerase (Thermosipho melanesiensis (strain DSM 12029 / CIP 104789 / BI429)).